A 113-amino-acid chain; its full sequence is MNDIQIPIIFTDAAAKKVKSLIEGEDNPNLRLRVYITGGGCSGFQYGFTFDDQINEGDLTIENQNVGLVVDPMSLQYLIGGTVDYTEGLDGSRFVVQNPNASSTCGCGSSFSI.

Residues C41, C105, and C107 each contribute to the iron-sulfur cluster site.

Belongs to the HesB/IscA family. Homodimer. It depends on iron-sulfur cluster as a cofactor.

Required for insertion of 4Fe-4S clusters for at least IspG. The sequence is that of Iron-sulfur cluster insertion protein ErpA from Actinobacillus pleuropneumoniae serotype 7 (strain AP76).